A 169-amino-acid chain; its full sequence is Fumarase E (169 aa).

Belongs to the MtlR/FumE family.

The enzyme catalyses (S)-malate = fumarate + H2O. In terms of biological role, in vitro catalyzes the addition of water to fumarate, forming malate. Cannot catalyze the reverse reaction. Cannot use the cis-isomer maleate as substrate. The polypeptide is Fumarase E (Escherichia coli (strain K12)).